We begin with the raw amino-acid sequence, 1066 residues long: Thyrotropin-releasing hormone-degrading ectoenzyme (1066 aa).

The span at 1-14 shows a compositional bias: basic and acidic residues; that stretch reads MALDGERGEQEEEK. Positions 1–43 are disordered; the sequence is MALDGERGEQEEEKKKKKKKKKRKKKEEEGAEKSSSPFAATMG. Over 1–81 the chain is Cytoplasmic; sequence MALDGERGEQ…ERHIAVHKRL (81 aa). Residues 15 to 25 show a composition bias toward basic residues; sequence KKKKKKKKRKK. At threonine 71 the chain carries Phosphothreonine; by PKC. The chain crosses the membrane as a helical; Signal-anchor for type II membrane protein span at residues 82-102; sequence VLAFAVSIVALLAVTMLAVLL. The Extracellular segment spans residues 103 to 1066; it reads SLRFDECGAS…FQWLGKAMRH (964 aa). A disordered region spans residues 118–176; it reads TDGGLGGFPERDSNSSFPGSARRNHHAGGESSQRESGEVGTPGTPSAQPPSEEEREQWQ. N-linked (GlcNAc...) asparagine glycosylation is found at asparagine 131, asparagine 202, asparagine 217, asparagine 264, and asparagine 380. 446-450 lines the substrate pocket; sequence AAMEN. Histidine 482 lines the Zn(2+) pocket. Glutamate 483 acts as the Proton acceptor in catalysis. Positions 486 and 505 each coordinate Zn(2+). N-linked (GlcNAc...) asparagine glycans are attached at residues asparagine 647, asparagine 676, asparagine 691, asparagine 705, asparagine 726, asparagine 842, and asparagine 948.

Belongs to the peptidase M1 family. In terms of assembly, homodimer; disulfide-linked. Requires Zn(2+) as cofactor.

It localises to the membrane. It catalyses the reaction Release of the N-terminal pyroglutamyl group from pGlu-|-His-Xaa tripeptides and pGlu-|-His-Xaa-Gly tetrapeptides.. Specific inactivation of TRH after its release. The polypeptide is Thyrotropin-releasing hormone-degrading ectoenzyme (Trhde) (Mus musculus (Mouse)).